A 385-amino-acid polypeptide reads, in one-letter code: Flap endonuclease 1 (385 aa).

The N-domain stretch occupies residues 1-104; the sequence is MGILGLSKLI…GELAKRAERR (104 aa). D34 provides a ligand contact to Mg(2+). Positions 47 and 70 each coordinate DNA. Residues D86, E158, E160, D179, and D181 each contribute to the Mg(2+) site. Residues 122-253 are I-domain; the sequence is GIEKFNRRLV…KRAIELINTY (132 aa). E158 lines the DNA pocket. G231 and D233 together coordinate DNA. A Mg(2+)-binding site is contributed by D233. The tract at residues 336–344 is interaction with PCNA; the sequence is TQVRLDSFF. Residues 346–385 form a disordered region; the sequence is TLPSTPNATNAAKRKAEEAKKSANNKKAKTSGGGRGRRPK. Residues 368–385 show a composition bias toward basic residues; sequence ANNKKAKTSGGGRGRRPK.

This sequence belongs to the XPG/RAD2 endonuclease family. FEN1 subfamily. As to quaternary structure, interacts with PCNA. Three molecules of FEN1 bind to one PCNA trimer with each molecule binding to one PCNA monomer. PCNA stimulates the nuclease activity without altering cleavage specificity. Mg(2+) is required as a cofactor. Phosphorylated. Phosphorylation upon DNA damage induces relocalization to the nuclear plasma.

Its subcellular location is the nucleus. It is found in the nucleolus. It localises to the nucleoplasm. The protein resides in the mitochondrion. Functionally, structure-specific nuclease with 5'-flap endonuclease and 5'-3' exonuclease activities involved in DNA replication and repair. During DNA replication, cleaves the 5'-overhanging flap structure that is generated by displacement synthesis when DNA polymerase encounters the 5'-end of a downstream Okazaki fragment. It enters the flap from the 5'-end and then tracks to cleave the flap base, leaving a nick for ligation. Also involved in the long patch base excision repair (LP-BER) pathway, by cleaving within the apurinic/apyrimidinic (AP) site-terminated flap. Acts as a genome stabilization factor that prevents flaps from equilibrating into structures that lead to duplications and deletions. Also possesses 5'-3' exonuclease activity on nicked or gapped double-stranded DNA, and exhibits RNase H activity. Also involved in replication and repair of rDNA and in repairing mitochondrial DNA. This Drosophila melanogaster (Fruit fly) protein is Flap endonuclease 1.